The following is a 214-amino-acid chain: Adenylate kinase (214 aa).

ATP is bound at residue 10–15; it reads GVGKGT. Residues 30–59 are NMP; that stretch reads STGDILRAAVKELTPMGAKAKGYMDSGALV. AMP is bound by residues Thr-31, Arg-36, 57-59, 85-88, and Gln-92; these read ALV and GFPR. The interval 126 to 163 is LID; it reads GRRACANCGAGYHVDFAPSKVAGVCDACSGQLVQREDD. Position 127 (Arg-127) interacts with ATP. Residues Cys-130, Cys-133, Cys-150, and Cys-153 each contribute to the Zn(2+) site. AMP is bound by residues Arg-160 and Arg-171. Gly-199 is a binding site for ATP.

The protein belongs to the adenylate kinase family. Monomer.

It is found in the cytoplasm. It carries out the reaction AMP + ATP = 2 ADP. It functions in the pathway purine metabolism; AMP biosynthesis via salvage pathway; AMP from ADP: step 1/1. Catalyzes the reversible transfer of the terminal phosphate group between ATP and AMP. Plays an important role in cellular energy homeostasis and in adenine nucleotide metabolism. This Citrifermentans bemidjiense (strain ATCC BAA-1014 / DSM 16622 / JCM 12645 / Bem) (Geobacter bemidjiensis) protein is Adenylate kinase.